The chain runs to 61 residues: Alpha-conotoxin EIIA (61 aa).

An N-terminal signal peptide occupies residues 1 to 16; it reads MFIVFLLVVLATTVGS. The propeptide occupies 17–40; it reads FTLDRVLEGRNAAAIDNALDQRDP. Glutamine 43 is modified (pyrrolidone carboxylic acid). A Hydroxyproline modification is found at proline 45. Cystine bridges form between cysteine 47–cysteine 53 and cysteine 48–cysteine 58. Residue cysteine 58 is modified to Cysteine amide.

The protein belongs to the conotoxin A superfamily. In terms of tissue distribution, expressed by the venom duct.

The protein resides in the secreted. Its function is as follows. Alpha-conotoxins bind to the nicotinic acetylcholine receptors (nAChR) and inhibit them. This peptide potently blocks muscular nicotinic acetylcholine receptor (CHRNA1-CHRNB1-CHRNG-CHRND), and has no effect on neuronal receptors. It is able to totally displace [125I]-Bgtx from the Torpedo receptor with a complete inhibition in the high micromolar range. It produces a biphasic inhibition curve which fits nicely with a two-site model (Ki of 0.46 and 105 nM). This is Alpha-conotoxin EIIA from Conus ermineus (Agate cone).